Reading from the N-terminus, the 210-residue chain is Histidine biosynthesis bifunctional protein HisIE (210 aa).

The interval 1–106 (MTKYKIDFSK…SCFNTEVPFS (106 aa)) is phosphoribosyl-AMP cyclohydrolase. The phosphoribosyl-ATP pyrophosphohydrolase stretch occupies residues 107 to 210 (VQTLAQTVQD…KGERQNIEQW (104 aa)).

It in the N-terminal section; belongs to the PRA-CH family. The protein in the C-terminal section; belongs to the PRA-PH family.

It localises to the cytoplasm. It carries out the reaction 1-(5-phospho-beta-D-ribosyl)-ATP + H2O = 1-(5-phospho-beta-D-ribosyl)-5'-AMP + diphosphate + H(+). The enzyme catalyses 1-(5-phospho-beta-D-ribosyl)-5'-AMP + H2O = 1-(5-phospho-beta-D-ribosyl)-5-[(5-phospho-beta-D-ribosylamino)methylideneamino]imidazole-4-carboxamide. It participates in amino-acid biosynthesis; L-histidine biosynthesis; L-histidine from 5-phospho-alpha-D-ribose 1-diphosphate: step 2/9. The protein operates within amino-acid biosynthesis; L-histidine biosynthesis; L-histidine from 5-phospho-alpha-D-ribose 1-diphosphate: step 3/9. The chain is Histidine biosynthesis bifunctional protein HisIE (hisI) from Staphylococcus aureus (strain Mu50 / ATCC 700699).